Reading from the N-terminus, the 460-residue chain is tRNA modification GTPase MnmE (460 aa).

Positions 29, 89, and 128 each coordinate (6S)-5-formyl-5,6,7,8-tetrahydrofolate. The TrmE-type G domain maps to 224-382 (GVPTVIIGKP…LKQNLLEIIQ (159 aa)). Asn234 provides a ligand contact to K(+). GTP contacts are provided by residues 234–239 (NAGKST), 253–259 (SEIAGTT), and 278–281 (DTAG). A Mg(2+)-binding site is contributed by Ser238. Residues Ser253, Ile255, and Thr258 each coordinate K(+). Thr259 contacts Mg(2+). Lys460 lines the (6S)-5-formyl-5,6,7,8-tetrahydrofolate pocket.

Belongs to the TRAFAC class TrmE-Era-EngA-EngB-Septin-like GTPase superfamily. TrmE GTPase family. As to quaternary structure, homodimer. Heterotetramer of two MnmE and two MnmG subunits. It depends on K(+) as a cofactor.

It is found in the cytoplasm. Functionally, exhibits a very high intrinsic GTPase hydrolysis rate. Involved in the addition of a carboxymethylaminomethyl (cmnm) group at the wobble position (U34) of certain tRNAs, forming tRNA-cmnm(5)s(2)U34. This Cytophaga hutchinsonii (strain ATCC 33406 / DSM 1761 / CIP 103989 / NBRC 15051 / NCIMB 9469 / D465) protein is tRNA modification GTPase MnmE.